The sequence spans 46 residues: EELPDSKDRAXPLSASKXISPYMKEAIPMSIPPVIDFNKPFLIIXY.

Ser30 is subject to Phosphoserine.

The protein belongs to the serpin family. Post-translationally, N-glycosylated; contains bi- and triantennary glycans with a bisecting N-acetylglucosamine and fucose residue. As to expression, plasma.

It localises to the secreted. This is Alpha-1-antiproteinase from Notamacropus eugenii (Tammar wallaby).